Here is a 76-residue protein sequence, read N- to C-terminus: Small ribosomal subunit protein bS18 (76 aa).

The protein belongs to the bacterial ribosomal protein bS18 family. In terms of assembly, part of the 30S ribosomal subunit. Forms a tight heterodimer with protein bS6.

In terms of biological role, binds as a heterodimer with protein bS6 to the central domain of the 16S rRNA, where it helps stabilize the platform of the 30S subunit. This is Small ribosomal subunit protein bS18 from Mesoplasma florum (strain ATCC 33453 / NBRC 100688 / NCTC 11704 / L1) (Acholeplasma florum).